The sequence spans 368 residues: Agmatine deiminase (368 aa).

Cysteine 357 (amidino-cysteine intermediate) is an active-site residue.

Belongs to the agmatine deiminase family. As to quaternary structure, homodimer.

It catalyses the reaction agmatine + H2O = N-carbamoylputrescine + NH4(+). The protein operates within amine and polyamine biosynthesis; putrescine biosynthesis via agmatine pathway; N-carbamoylputrescine from agmatine: step 1/1. Its function is as follows. Mediates the hydrolysis of agmatine into N-carbamoylputrescine in the arginine decarboxylase (ADC) pathway of putrescine biosynthesis, a basic polyamine. This Pseudomonas syringae pv. tomato (strain ATCC BAA-871 / DC3000) protein is Agmatine deiminase.